The sequence spans 100 residues: Protein translation factor SUI1 homolog (100 aa).

The protein belongs to the SUI1 family.

The sequence is that of Protein translation factor SUI1 homolog from Thermoplasma volcanium (strain ATCC 51530 / DSM 4299 / JCM 9571 / NBRC 15438 / GSS1).